A 331-amino-acid polypeptide reads, in one-letter code: Probable inactive O-methyltransferase 11 (331 aa).

S-adenosyl-L-methionine contacts are provided by residues Gly-179, Asp-202, 224–226 (GDF), Asp-225, Phe-226, and Lys-239.

This sequence belongs to the class I-like SAM-binding methyltransferase superfamily. Cation-independent O-methyltransferase family. COMT subfamily.

This Dictyostelium discoideum (Social amoeba) protein is Probable inactive O-methyltransferase 11 (omt11).